The primary structure comprises 377 residues: Sodium-dependent organic anion transporter (377 aa).

Topologically, residues 1 to 29 (MRANCSSGLACPANSSEEELPEGLKAFGN) are extracellular. An N-linked (GlcNAc...) asparagine glycan is attached at N4. A helical membrane pass occupies residues 30 to 50 (LDLVFTVVSALMIGLLMFSLG). At 51–67 (CSVEVQKLWGHIRRPWG) the chain is on the cytoplasmic side. The helical transmembrane segment at 68 to 88 (IAVGMLCQFGLMPLIAYLLII) threads the bilayer. Over 89-97 (SFSLKPLQA) the chain is Extracellular. Residues 98 to 118 (IAVLIMGCCPGGTVSNIFTFW) traverse the membrane as a helical segment. Residues 119–133 (VDGDMDLSISMTTCS) lie on the Cytoplasmic side of the membrane. The chain crosses the membrane as a helical span at residues 134–154 (TMAALGMMPLCLYLYTLSWNL). The Extracellular segment spans residues 155–159 (EQNLT). N157 carries N-linked (GlcNAc...) asparagine glycosylation. The helical transmembrane segment at 160 to 180 (IPYQNIGITLVCLIIPVAFGI) threads the bilayer. At 181-195 (YVNYRWPKQSKIILK) the chain is on the cytoplasmic side. The chain crosses the membrane as a helical span at residues 196-216 (IGAIAGGLLFLVVTGAGMVLM). Residues 217–223 (KEFWSSD) are Extracellular-facing. A helical membrane pass occupies residues 224–244 (IILLMISFIFPLIGHATGFLL). At 245 to 257 (ALLTHQSWQRCRT) the chain is on the cytoplasmic side. The chain crosses the membrane as a helical span at residues 258-278 (ISLETGTQNVQMCFTMLQLSF). The Extracellular portion of the chain corresponds to 279 to 285 (TAEQLVQ). The helical transmembrane segment at 286 to 306 (IFGFVLAYGLFQMLNGFFMVA) threads the bilayer. The Cytoplasmic portion of the chain corresponds to 307 to 377 (AYKMYKRRLK…TPTGDIARAK (71 aa)). The disordered stretch occupies residues 319–377 (HGNEKPSCQEARHRKKSTSPKETTAFLEVNEEATLSPGPSGPVDPHGAPTPTGDIARAK).

It belongs to the bile acid:sodium symporter (BASS) (TC 2.A.28) family. Glycosylated.

The protein localises to the membrane. It carries out the reaction estrone 3-sulfate(out) + 2 Na(+)(out) = estrone 3-sulfate(in) + 2 Na(+)(in). The catalysed reaction is 17beta-estradiol 3-sulfate(out) + 2 Na(+)(out) = 17beta-estradiol 3-sulfate(in) + 2 Na(+)(in). It catalyses the reaction dehydroepiandrosterone 3-sulfate(out) + 2 Na(+)(out) = dehydroepiandrosterone 3-sulfate(in) + 2 Na(+)(in). The enzyme catalyses androst-5-ene-diol 3-sulfate(out) + 2 Na(+)(out) = androst-5-ene-diol 3-sulfate(in) + 2 Na(+)(in). It carries out the reaction pregnenolone sulfate(out) + 2 Na(+)(out) = pregnenolone sulfate(in) + 2 Na(+)(in). The catalysed reaction is taurolithocholate 3-sulfate(out) + 2 Na(+)(out) = taurolithocholate 3-sulfate(in) + 2 Na(+)(in). It catalyses the reaction androsterone 3alpha-sulfate(out) + 2 Na(+)(out) = androsterone 3alpha-sulfate(in) + 2 Na(+)(in). The enzyme catalyses 5alpha-dihydrotestosterone sulfate(out) + 2 Na(+)(out) = 5alpha-dihydrotestosterone sulfate(in) + 2 Na(+)(in). It carries out the reaction 17beta-estradiol 17-sulfate(out) + 2 Na(+)(out) = 17beta-estradiol 17-sulfate(in) + 2 Na(+)(in). The catalysed reaction is 17alpha-hydroxypregnenolone 3-sulfate(out) + 2 Na(+)(out) = 17alpha-hydroxypregnenolone 3-sulfate(in) + 2 Na(+)(in). It catalyses the reaction epiandrosterone 3-sulfate(out) + 2 Na(+)(out) = epiandrosterone 3-sulfate(in) + 2 Na(+)(in). The enzyme catalyses epitestosterone 17-sulfate(out) + 2 Na(+)(out) = epitestosterone 17-sulfate(in) + 2 Na(+)(in). It carries out the reaction testosterone 17-sulfate(out) + 2 Na(+)(out) = testosterone 17-sulfate(in) + 2 Na(+)(in). The catalysed reaction is 16alpha-hydroxydehydroepiandrosterone 3-sulfate(out) + 2 Na(+)(out) = 16alpha-hydroxydehydroepiandrosterone 3-sulfate(in) + 2 Na(+)(in). In terms of biological role, transports sulfoconjugated steroid hormones from the extracellular compartment into the cytosol in a sodium-dependent manner without hydrolysis. Steroid sulfate hormones are commonly considered to be biologically inactive metabolites, that may be activated by steroid sulfatases into free steroids. May play an important role by delivering sulfoconjugated steroids to specific target cells in reproductive organs. May play a role transporting the estriol precursor 16alpha-hydroxydehydroepiandrosterone 3-sulfate (16a-OH-DHEAS) at the fetal blood vessel endothelium. Can also transport other sulfoconjugated molecules such as taurolithocholic acid-3-sulfate and sulfoconjugated pyrenes. The polypeptide is Sodium-dependent organic anion transporter (SLC10A6) (Bos taurus (Bovine)).